Here is a 138-residue protein sequence, read N- to C-terminus: Peptide methionine sulfoxide reductase MsrB (138 aa).

Residues Glu-15–Arg-137 enclose the MsrB domain. Zn(2+)-binding residues include Cys-54, Cys-57, Cys-103, and Cys-106. Residue Cys-126 is the Nucleophile of the active site.

The protein belongs to the MsrB Met sulfoxide reductase family. Zn(2+) is required as a cofactor.

It carries out the reaction L-methionyl-[protein] + [thioredoxin]-disulfide + H2O = L-methionyl-(R)-S-oxide-[protein] + [thioredoxin]-dithiol. In Methylibium petroleiphilum (strain ATCC BAA-1232 / LMG 22953 / PM1), this protein is Peptide methionine sulfoxide reductase MsrB.